The following is a 536-amino-acid chain: C-22 sterol desaturase ERG5A (536 aa).

The chain crosses the membrane as a helical span at residues 41–61 (VWTWVFTLVALCIAYDQIAYI). Cys-481 is a heme binding site.

Belongs to the cytochrome P450 family. Heme serves as cofactor.

The protein resides in the endoplasmic reticulum membrane. The catalysed reaction is 5-dehydroepisterol + NADPH + O2 + H(+) = ergosta-5,7,22,24(28)-tetraen-3beta-ol + NADP(+) + 2 H2O. The protein operates within steroid metabolism; ergosterol biosynthesis. Its function is as follows. C-22 sterol desaturase; part of the third module of ergosterol biosynthesis pathway that includes the late steps of the pathway. ERG5A and ERG5B convert 5-dehydroepisterol into ergosta-5,7,22,24(28)-tetraen-3beta-ol by forming the C-22(23) double bond in the sterol side chain. The third module or late pathway involves the ergosterol synthesis itself through consecutive reactions that mainly occur in the endoplasmic reticulum (ER) membrane. Firstly, the squalene synthase ERG9 catalyzes the condensation of 2 farnesyl pyrophosphate moieties to form squalene, which is the precursor of all steroids. Squalene synthase is crucial for balancing the incorporation of farnesyl diphosphate (FPP) into sterol and nonsterol isoprene synthesis. Secondly, squalene is converted into lanosterol by the consecutive action of the squalene epoxidase ERG1 and the lanosterol synthase ERG7. Then, the delta(24)-sterol C-methyltransferase ERG6 methylates lanosterol at C-24 to produce eburicol. Eburicol is the substrate of the sterol 14-alpha demethylase encoded by CYP51A, CYP51B and CYP51C, to yield 4,4,24-trimethyl ergosta-8,14,24(28)-trienol. CYP51B encodes the enzyme primarily responsible for sterol 14-alpha-demethylation, and plays an essential role in ascospore formation. CYP51A encodes an additional sterol 14-alpha-demethylase, induced on ergosterol depletion and responsible for the intrinsic variation in azole sensitivity. The third CYP51 isoform, CYP51C, does not encode a sterol 14-alpha-demethylase, but is required for full virulence on host wheat ears. The C-14 reductase ERG24 then reduces the C14=C15 double bond which leads to 4,4-dimethylfecosterol. A sequence of further demethylations at C-4, involving the C-4 demethylation complex containing the C-4 methylsterol oxidases ERG25, the sterol-4-alpha-carboxylate 3-dehydrogenase ERG26 and the 3-keto-steroid reductase ERG27, leads to the production of fecosterol via 4-methylfecosterol. ERG28 has a role as a scaffold to help anchor ERG25, ERG26 and ERG27 to the endoplasmic reticulum. The C-8 sterol isomerase ERG2 then catalyzes the reaction which results in unsaturation at C-7 in the B ring of sterols and thus converts fecosterol to episterol. The sterol-C5-desaturases ERG3A and ERG3BB then catalyze the introduction of a C-5 double bond in the B ring to produce 5-dehydroepisterol. The C-22 sterol desaturases ERG5A and ERG5B further convert 5-dehydroepisterol into ergosta-5,7,22,24(28)-tetraen-3beta-ol by forming the C-22(23) double bond in the sterol side chain. Finally, ergosta-5,7,22,24(28)-tetraen-3beta-ol is substrate of the C-24(28) sterol reductase ERG4 to produce ergosterol. The polypeptide is C-22 sterol desaturase ERG5A (Gibberella zeae (strain ATCC MYA-4620 / CBS 123657 / FGSC 9075 / NRRL 31084 / PH-1) (Wheat head blight fungus)).